An 82-amino-acid polypeptide reads, in one-letter code: RNA-binding protein Hfq (82 aa).

Residues 9–68 (DPFLNTLRKEHVPVSIYLVNGIKLQGKVDSFDQYVIMLKNTVSQMVYKHAISTIVPGRPV) enclose the Sm domain.

This sequence belongs to the Hfq family. In terms of assembly, homohexamer.

Functionally, RNA chaperone that binds small regulatory RNA (sRNAs) and mRNAs to facilitate mRNA translational regulation in response to envelope stress, environmental stress and changes in metabolite concentrations. Also binds with high specificity to tRNAs. In Methylococcus capsulatus (strain ATCC 33009 / NCIMB 11132 / Bath), this protein is RNA-binding protein Hfq.